A 359-amino-acid chain; its full sequence is MVTGIVFHEEYLKHEQSPTHPERRERLAYTMDQLREEGIFESERIVLLEPFKASLEDVLEVHTEEYVRFLEMESKKGGIIDFDTNIPVGVFDRALLAAGGAIRAAQAVLNKECENAFAMIRPPGHHAKPYIGAGFCYLNNMAIMVKWLLKQGFERIAILDWDAHHGDGTQEIFYNDDRVLFISTHQMPLYPGTGYPEECGTGKGEGYTVNIPLPPGTGDEGYMMVIDEIIEPVVNEFKPQFIAISAGQDNHFTDPITSLALTARGYAEMMRRAVAMAEKHCDGRLVAVLEGGYSVEGALPYTNLGIIAAMAGFDLSAIREPENYLPELLWRKRDSALVKLKHNIEDVKRVHSKYWKCFK.

Histidine 126 acts as the Proton donor/acceptor in catalysis. Zn(2+) is bound by residues aspartate 162, histidine 164, and aspartate 249.

This sequence belongs to the histone deacetylase family. It depends on Zn(2+) as a cofactor.

Its function is as follows. Probable deacetylase. This Archaeoglobus fulgidus (strain ATCC 49558 / DSM 4304 / JCM 9628 / NBRC 100126 / VC-16) protein is Probable deacetylase AF_0130.